Consider the following 381-residue polypeptide: CCN family member 1 (381 aa).

Residues 1–24 (MSSRIARALALVVTLLHLTRLALS) form the signal peptide. The region spanning 25–94 (TCPAACHCPL…TALKGICRAQ (70 aa)) is the IGFBP N-terminal domain. 6 disulfide bridges follow: C26–C50, C30–C52, C32–C53, C39–C56, C64–C78, and C70–C91. Positions 98–164 (RPCEYNSRIY…GQCCEEWVCD (67 aa)) constitute a VWFC domain. S188 is modified (phosphoserine; by FAM20C). The region spanning 228–273 (KCIVQTTSWSQCSKTCGTGISTRVTNDNPECRLVKETRICEVRPCG) is the TSP type-1 domain. Residues 279–315 (SLKKGKKCSKTKKSPEPVRFTYAGCLSVKKYRPKYCG) are heparin-binding. 5 cysteine pairs are disulfide-bonded: C286–C323, C303–C337, C314–C353, C317–C355, and C322–C359. The CTCK domain maps to 286–360 (CSKTKKSPEP…QSCKCNYNCP (75 aa)).

Belongs to the CCN family. Interaction with integrins is heparin- and cell-type-dependent and promotes cell adhesion. In skin fibroblasts it binds ITGA6/ITGB1, in endothelial cells, binds ITGAV/ITGB3 and in platelets, ITGA2B/ITGB3. Binds, in vitro, ITGAV/ITGB5.

The protein localises to the secreted. Promotes cell proliferation, chemotaxis, angiogenesis and cell adhesion. Appears to play a role in wound healing by up-regulating, in skin fibroblasts, the expression of a number of genes involved in angiogenesis, inflammation and matrix remodeling including VEGA-A, VEGA-C, MMP1, MMP3, TIMP1, uPA, PAI-1 and integrins alpha-3 and alpha-5. CCN1-mediated gene regulation is dependent on heparin-binding. Down-regulates the expression of alpha-1 and alpha-2 subunits of collagen type-1. Promotes cell adhesion and adhesive signaling through integrin alpha-6/beta-1, cell migration through integrin alpha-v/beta-5 and cell proliferation through integrin alpha-v/beta-3. The protein is CCN family member 1 of Homo sapiens (Human).